The primary structure comprises 317 residues: Ribosomal protein L11 methyltransferase (317 aa).

The S-adenosyl-L-methionine site is built by T158, G179, D201, and N244.

Belongs to the methyltransferase superfamily. PrmA family.

Its subcellular location is the cytoplasm. It catalyses the reaction L-lysyl-[protein] + 3 S-adenosyl-L-methionine = N(6),N(6),N(6)-trimethyl-L-lysyl-[protein] + 3 S-adenosyl-L-homocysteine + 3 H(+). Methylates ribosomal protein L11. The polypeptide is Ribosomal protein L11 methyltransferase (Lactococcus lactis subsp. cremoris (strain SK11)).